A 166-amino-acid polypeptide reads, in one-letter code: Emerin homolog 1 (166 aa).

Residues 1–44 (MDVSQLTDAELRDSLKSHGVSVGPIVATTRKLYEKKLIKLSDGS) form the LEM domain. The Nuclear portion of the chain corresponds to 1-127 (MDVSQLTDAE…QAQSNKGGFL (127 aa)). The disordered stretch occupies residues 62–99 (IISSSPKKSPPQRVFQNVSAATAAATTSPESDSDDCEE). The chain crosses the membrane as a helical span at residues 128–148 (GSTITFTILFVFIAVFAYFLI). At 149–166 (ENAEQLKLVAETNPEDTI) the chain is on the perinuclear space side.

Interacts with lmn-1 and baf-1. As to expression, ubiquitous. Expressed in all cells, except in cells undergoing spermatogenesis. High expression in hypodermis, neurons, pharyngeal muscle, body wall muscle and gonadal sheath.

The protein resides in the nucleus inner membrane. It localises to the nucleus envelope. In terms of biological role, nuclear lamina-associated inner nuclear membrane protein that is involved in cell division, nuclear structure organization, maintenance of nuclear envelope integrity and nuclear envelope reformation after mitosis. Involved in chromosome segregation and cell division, probably via its interaction with the nuclear intermediate filament protein lmn-1, the main component of nuclear lamina. Required to organize the distribution of lmn-1, nuclear pore complexes (NPCs) and chromatin in mitotically active cells. Together with lem-2, plays a role in baf-1 enrichment at the nuclear envelope in anaphase. Together with lem-2, involved in muscle cell attachment to hypodermal cells, as well as muscle cell location and sarcomere organization. May play a role in radiation-induced DNA damage repair response. May repress binding of transcription factor pha-4 with target sequences in pharyngeal cells. In Caenorhabditis elegans, this protein is Emerin homolog 1 (emr-1).